Here is a 375-residue protein sequence, read N- to C-terminus: Meiotic driver cw27 (375 aa).

Disordered stretches follow at residues 1-42 and 74-103; these read MKNK…STLP and DYDE…GTTD. Residues 11 to 29 are compositionally biased toward basic and acidic residues; that stretch reads SMDELSTKNDNEIDLEKGP. 7 consecutive transmembrane segments (helical) span residues 108–128, 145–165, 172–192, 208–228, 245–265, 272–292, and 336–356; these read FLIK…PAVC, WTLI…SWCF, AVKV…ISLA, EMMI…FGCV, TISA…WTLW, LQVL…MSLF, and VIGF…NAIG.

The protein belongs to the WTF family. In terms of assembly, homomer. Forms protein aggregates. The two isoforms can interact with each other and with themselves. High sequence similarity is required for their interaction.

Its subcellular location is the spore membrane. The protein localises to the vacuole. The protein resides in the membrane. It localises to the ascus epiplasm. It is found in the cytoplasm. Its subcellular location is the endoplasmic reticulum. Promotes unequal transmission of alleles from the parental zygote to progeny spores by acting as poison/antidote system where the poison and antidote proteins are produced from the same locus; the poison component is trans-acting and targets all spores within an ascus whereas the antidote component is spore-specific, leading to poisoning of all progeny that do not inherit the allele. Its function is as follows. Localizes isoform 2 to the vacuole thereby facilitating its degradation. In terms of biological role, forms toxic aggregates that disrupt spore maturation. The chain is Meiotic driver cw27 from Schizosaccharomyces pombe (Fission yeast).